Reading from the N-terminus, the 86-residue chain is MIPAVILFLLLLVEEAAALGEPQLCYILDAILFLYGIVLTLLYCRLKIQVRKADIASREKSDAVYTGLNTRNQETYETLKHEKPPQ.

A signal peptide spans 1–18 (MIPAVILFLLLLVEEAAA). Residues 19–23 (LGEPQ) lie on the Extracellular side of the membrane. The helical transmembrane segment at 24–44 (LCYILDAILFLYGIVLTLLYC) threads the bilayer. The Cytoplasmic portion of the chain corresponds to 45–86 (RLKIQVRKADIASREKSDAVYTGLNTRNQETYETLKHEKPPQ). Residues 54 to 82 (DIASREKSDAVYTGLNTRNQETYETLKHE) enclose the ITAM domain. Residues Tyr65 and Tyr76 each carry the phosphotyrosine modification. Thr78 bears the Phosphothreonine mark.

Belongs to the CD3Z/FCER1G family. In terms of assembly, igE Fc receptor is a tetramer of an alpha chain, a beta chain, and two disulfide linked gamma chains. Associates with FCGR1A to form a functional receptor complex. The signaling subunit of immunoglobulin gamma (IgG) Fc receptor complex. As a homodimer or a heterodimer of CD247 and FCER1G, associates with the ligand binding subunit FCGR3A to form a functional receptor complex. Associates with CLEC6A. Interacts with CLEC4E. Interacts (via ITAM domain) with SYK (via SH2 domains); activates SYK, enabling integrin-mediated activation of neutrophils and macrophages. Interacts with common beta chain of interleukin 3 receptor CSF2RB and recruits SYK in response to IL3 stimulation; this interaction is direct. Interacts with CD300LH; the interaction may be indirect. Interacts with CD300LD. Interacts with TARM1. As to expression, expressed in leukocytes and pinealocytes. Expression in the pineal gland does not undergo circadian variations.

It is found in the cell membrane. In terms of biological role, adapter protein containing an immunoreceptor tyrosine-based activation motif (ITAM) that transduces activation signals from various immunoreceptors. As a component of the high-affinity immunoglobulin E (IgE) receptor, mediates allergic inflammatory signaling in mast cells. As a constitutive component of interleukin-3 receptor complex, selectively mediates interleukin 4/IL4 production by basophils priming T-cells toward effector T-helper 2 subset. Associates with pattern recognition receptors CLEC4D and CLEC4E to form a functional signaling complex in myeloid cells. Binding of mycobacterial trehalose 6,6'-dimycolate (TDM) to this receptor complex leads to phosphorylation of ITAM, triggering activation of SYK, CARD9 and NF-kappa-B, consequently driving maturation of antigen-presenting cells and shaping antigen-specific priming of T-cells toward effector T-helper 1 and T-helper 17 cell subtypes. May function cooperatively with other activating receptors. Functionally linked to integrin beta-2/ITGB2-mediated neutrophil activation. Also involved in integrin alpha-2/ITGA2-mediated platelet activation. This chain is High affinity immunoglobulin epsilon receptor subunit gamma (Fcer1g), found in Rattus norvegicus (Rat).